The chain runs to 177 residues: Large ribosomal subunit protein uL6 (177 aa).

This sequence belongs to the universal ribosomal protein uL6 family. As to quaternary structure, part of the 50S ribosomal subunit.

Its function is as follows. This protein binds to the 23S rRNA, and is important in its secondary structure. It is located near the subunit interface in the base of the L7/L12 stalk, and near the tRNA binding site of the peptidyltransferase center. This Latilactobacillus sakei subsp. sakei (strain 23K) (Lactobacillus sakei subsp. sakei) protein is Large ribosomal subunit protein uL6.